Reading from the N-terminus, the 274-residue chain is Large ribosomal subunit protein uL2cz/uL2cy (274 aa).

Disordered regions lie at residues 1–33 (MAIH…LIYG) and 223–265 (MNPV…KYND).

It belongs to the universal ribosomal protein uL2 family. In terms of assembly, part of the 50S ribosomal subunit.

Its subcellular location is the plastid. The protein resides in the chloroplast. This Pelargonium hortorum (Common geranium) protein is Large ribosomal subunit protein uL2cz/uL2cy (rpl2-A).